Here is a 111-residue protein sequence, read N- to C-terminus: Auxin-repressed 12.5 kDa protein (111 aa).

The tract at residues 18–111 (ERGLGMLRKV…SGETRSKHHR (94 aa)) is disordered. Residues 43–57 (TMPTTPTTPVTPTTP) are compositionally biased toward low complexity. A compositionally biased stretch (polar residues) spans 74-95 (SNLSSKTMGNQVFDSPQPNSPT).

Belongs to the DRM1/ARP family.

This chain is Auxin-repressed 12.5 kDa protein, found in Fragaria ananassa (Strawberry).